The sequence spans 352 residues: Isoflavone-7-O-methyltransferase 8 (352 aa).

118-127 contributes to the substrate binding site; sequence VLDPTLSGSY. S-adenosyl-L-methionine-binding residues include Gly-196, Asp-219, Asp-239, Met-240, and Lys-253. The active-site Proton acceptor is His-257.

Belongs to the class I-like SAM-binding methyltransferase superfamily. Cation-independent O-methyltransferase family. COMT subfamily. Homodimer.

It catalyses the reaction a 7-hydroxyisoflavone + S-adenosyl-L-methionine = a 7-methoxyisoflavone + S-adenosyl-L-homocysteine + H(+). Its pathway is phytoalexin biosynthesis; medicarpin biosynthesis. In terms of biological role, transfers a methyl group to 7-hydroxyls of the isoflavones daidzein, genistein and 6,7,4'-trihydroxyisoflavone. Can also methylate (+)6a-hydroxymaackiain with lower efficiency. In Medicago sativa (Alfalfa), this protein is Isoflavone-7-O-methyltransferase 8.